The sequence spans 158 residues: Transcription elongation factor GreB (158 aa).

Residues 53-75 (KRRLREIDRRVRFLTKRLEVLQI) are a coiled coil.

The protein belongs to the GreA/GreB family. GreB subfamily.

Functionally, necessary for efficient RNA polymerase transcription elongation past template-encoded arresting sites. The arresting sites in DNA have the property of trapping a certain fraction of elongating RNA polymerases that pass through, resulting in locked ternary complexes. Cleavage of the nascent transcript by cleavage factors such as GreA or GreB allows the resumption of elongation from the new 3'terminus. GreB releases sequences of up to 9 nucleotides in length. This is Transcription elongation factor GreB from Pasteurella multocida (strain Pm70).